Here is a 62-residue protein sequence, read N- to C-terminus: Large ribosomal subunit protein bL28 (62 aa).

The segment at 1–24 is disordered; that stretch reads MGKQCFVTGRKASTGNNRSHALNS. Polar residues predominate over residues 11-24; the sequence is KASTGNNRSHALNS.

This sequence belongs to the bacterial ribosomal protein bL28 family.

The protein is Large ribosomal subunit protein bL28 of Staphylococcus saprophyticus subsp. saprophyticus (strain ATCC 15305 / DSM 20229 / NCIMB 8711 / NCTC 7292 / S-41).